Here is a 127-residue protein sequence, read N- to C-terminus: Small ribosomal subunit protein uS12 (127 aa).

Asp89 carries the post-translational modification 3-methylthioaspartic acid. Positions 101-127 are disordered; it reads ALDTSGVAGRTQRRSKYGAKRPKEAKK. The span at 111–127 shows a compositional bias: basic residues; that stretch reads TQRRSKYGAKRPKEAKK.

This sequence belongs to the universal ribosomal protein uS12 family. As to quaternary structure, part of the 30S ribosomal subunit. Contacts proteins S8 and S17. May interact with IF1 in the 30S initiation complex.

Its function is as follows. With S4 and S5 plays an important role in translational accuracy. In terms of biological role, interacts with and stabilizes bases of the 16S rRNA that are involved in tRNA selection in the A site and with the mRNA backbone. Located at the interface of the 30S and 50S subunits, it traverses the body of the 30S subunit contacting proteins on the other side and probably holding the rRNA structure together. The combined cluster of proteins S8, S12 and S17 appears to hold together the shoulder and platform of the 30S subunit. This chain is Small ribosomal subunit protein uS12, found in Flavobacterium johnsoniae (strain ATCC 17061 / DSM 2064 / JCM 8514 / BCRC 14874 / CCUG 350202 / NBRC 14942 / NCIMB 11054 / UW101) (Cytophaga johnsonae).